The sequence spans 205 residues: Cytochrome c biogenesis ATP-binding export protein CcmA (205 aa).

Residues 2-204 (LEVSNLTAIR…SPKLRKIKLG (203 aa)) form the ABC transporter domain. Position 34-41 (34-41 (GRNGTGKT)) interacts with ATP.

The protein belongs to the ABC transporter superfamily. CcmA exporter (TC 3.A.1.107) family. The complex is composed of two ATP-binding proteins (CcmA) and two transmembrane proteins (CcmB).

The protein localises to the cell inner membrane. It catalyses the reaction heme b(in) + ATP + H2O = heme b(out) + ADP + phosphate + H(+). Part of the ABC transporter complex CcmAB involved in the biogenesis of c-type cytochromes; once thought to export heme, this seems not to be the case, but its exact role is uncertain. Responsible for energy coupling to the transport system. The chain is Cytochrome c biogenesis ATP-binding export protein CcmA from Vibrio vulnificus (strain YJ016).